The primary structure comprises 313 residues: 4-hydroxy-3-methylbut-2-enyl diphosphate reductase (313 aa).

C12 is a binding site for [4Fe-4S] cluster. (2E)-4-hydroxy-3-methylbut-2-enyl diphosphate-binding residues include H41 and H74. Dimethylallyl diphosphate contacts are provided by H41 and H74. The isopentenyl diphosphate site is built by H41 and H74. Position 96 (C96) interacts with [4Fe-4S] cluster. H124 serves as a coordination point for (2E)-4-hydroxy-3-methylbut-2-enyl diphosphate. H124 serves as a coordination point for dimethylallyl diphosphate. H124 contributes to the isopentenyl diphosphate binding site. E126 (proton donor) is an active-site residue. (2E)-4-hydroxy-3-methylbut-2-enyl diphosphate is bound at residue T167. C197 contributes to the [4Fe-4S] cluster binding site. (2E)-4-hydroxy-3-methylbut-2-enyl diphosphate-binding residues include S225, S226, N227, and S269. Dimethylallyl diphosphate-binding residues include S225, S226, N227, and S269. 4 residues coordinate isopentenyl diphosphate: S225, S226, N227, and S269.

Belongs to the IspH family. In terms of assembly, homodimer. It depends on [4Fe-4S] cluster as a cofactor.

It catalyses the reaction isopentenyl diphosphate + 2 oxidized [2Fe-2S]-[ferredoxin] + H2O = (2E)-4-hydroxy-3-methylbut-2-enyl diphosphate + 2 reduced [2Fe-2S]-[ferredoxin] + 2 H(+). It carries out the reaction dimethylallyl diphosphate + 2 oxidized [2Fe-2S]-[ferredoxin] + H2O = (2E)-4-hydroxy-3-methylbut-2-enyl diphosphate + 2 reduced [2Fe-2S]-[ferredoxin] + 2 H(+). The protein operates within isoprenoid biosynthesis; dimethylallyl diphosphate biosynthesis; dimethylallyl diphosphate from (2E)-4-hydroxy-3-methylbutenyl diphosphate: step 1/1. Its pathway is isoprenoid biosynthesis; isopentenyl diphosphate biosynthesis via DXP pathway; isopentenyl diphosphate from 1-deoxy-D-xylulose 5-phosphate: step 6/6. Its function is as follows. Catalyzes the conversion of 1-hydroxy-2-methyl-2-(E)-butenyl 4-diphosphate (HMBPP) into a mixture of isopentenyl diphosphate (IPP) and dimethylallyl diphosphate (DMAPP). Acts in the terminal step of the DOXP/MEP pathway for isoprenoid precursor biosynthesis. In Buchnera aphidicola subsp. Schizaphis graminum (strain Sg), this protein is 4-hydroxy-3-methylbut-2-enyl diphosphate reductase.